The primary structure comprises 516 residues: Poly(U)-binding-splicing factor PUF60-B (516 aa).

RRM domains lie at 86 to 164 and 183 to 261; these read CRVY…RPGS and NRIY…KAVT. The disordered stretch occupies residues 356–398; sequence TAPASMGTPTSAVQLHTEVKREEDSRRTAEDHSAPVGNGQDSE. A compositionally biased stretch (basic and acidic residues) spans 372 to 388; the sequence is TEVKREEDSRRTAEDHS. An RRM 3; atypical domain is found at 419–506; sequence TVMVLRNMVG…RKVVAELYDQ (88 aa).

It belongs to the RRM half pint family.

It localises to the nucleus. Functionally, DNA- and RNA-binding protein, involved in transcription repression and pre-mRNA splicing. The polypeptide is Poly(U)-binding-splicing factor PUF60-B (puf60b) (Danio rerio (Zebrafish)).